The chain runs to 193 residues: Non-specific lipid transfer protein GPI-anchored 1 (193 aa).

The first 22 residues, 1–22 (MKGLHLHLVLVTMTIVASIAAA), serve as a signal peptide directing secretion. Cystine bridges form between C35-C76, C45-C60, C61-C106, and C74-C116. 2 N-linked (GlcNAc...) asparagine glycosylation sites follow: N110 and N135. The disordered stretch occupies residues 138 to 161 (TTPVAPAGKSPATPATSTDKGGSA). D165 is lipidated: GPI-anchor amidated aspartate. A propeptide spans 166–193 (GHAVVALAVALMAVSFVLTLPRHVTLGM) (removed in mature form).

It belongs to the plant LTP family. O-glycosylated on hydroxyprolines; noncontiguous hydroxylproline residues are glycosylated with arabinogalactan. As to expression, up-regulated in the epidermis of stems and leaves. Expressed in the epidermis, stem cortex, vascular bundles and mesophyll cells in root tips, cotyledons, seedlings, leaves, caulines, flowers, siliques, pollen, and early-developing seeds.

The protein resides in the cell membrane. Its subcellular location is the secreted. It is found in the cell wall. The protein localises to the endoplasmic reticulum. It localises to the golgi apparatus. Functionally, lipid transfer protein that, together with LTPG2, binds to lipids and functions as a component of the cuticular lipid export machinery that performs extensive export of intracellular lipids (e.g. C29 alkane) from epidermal cells to the surface to build the cuticular wax layer and silique walls. Involved in the establishment of resistance to the necrotrophic fungal pathogen Alternaria brassicicola. Contributes to pre-invasive defense against some non-host powdery mildew pathogens by preventing the penetration of the epidermal cell wall by the fungal agents (e.g. Blumeria graminis f. sp. hordei (Bgh)). Maybe involved in seed and ovule maturation and development, probably by regulating the fatty acids homeostasis during suberin and sporopollenin biosynthesis or deposition. This chain is Non-specific lipid transfer protein GPI-anchored 1, found in Arabidopsis thaliana (Mouse-ear cress).